Here is a 411-residue protein sequence, read N- to C-terminus: Protrudin (411 aa).

A disordered region spans residues 1–27 (MQTSEREGSGPELSPSVMPEAPLESPP). The Cytoplasmic segment spans residues 1–66 (MQTSEREGSG…AGDGVRYLLR (66 aa)). The tract at residues 1–92 (MQTSEREGSG…LFLTLNEGAW (92 aa)) is sufficient for homooligomerization. The segment at 1–205 (MQTSEREGSG…LYLLPLCWVL (205 aa)) is sufficient for localization to endoplasmic reticulum tubular network and for interactions with REEP1, REEP5, ATL1, ATL2, ATL3 and SPAST. The necessary for interaction with RAB11A and function in neurite outgrowth stretch occupies residues 51–64 (LEPLKDAGDGVRYL). A helical transmembrane segment spans residues 67 to 87 (WQMPLCSLLTCLGLNVLFLTL). Position 88 (Asn-88) is a topological domain, lumenal. Residues 89–109 (EGAWYSVGALMISVPALLGYL) traverse the membrane as a helical segment. Over 110-187 (QEVCRARLPD…NPVVSSQFYG (78 aa)) the chain is Cytoplasmic. The helical intramembrane region spans 188 to 208 (ALLGTVCMLYLLPLCWVLTLL). At 209–411 (NSTLFLGNVE…CASCNQTLSK (203 aa)) the chain is on the cytoplasmic side. A disordered region spans residues 234–286 (MNPKQEEHAFESPPPPDVGGKDGLMDSTPALTPTEDLTPGSVEEAEEAEPDEE). The tract at residues 271 to 361 (TPGSVEEAEE…GCSATFSVLK (91 aa)) is necessary for interaction with KIF5A. The span at 276–286 (EEAEEAEPDEE) shows a compositional bias: acidic residues. Residues 286-292 (EFKDAIE) are necessary for interaction with VAPA and function in cell projections formation. Residues 344–410 (TNNFGNCTGC…VCASCNQTLS (67 aa)) form an FYVE-type zinc finger. 8 residues coordinate Zn(2+): Cys-350, Cys-353, Cys-366, Cys-369, Cys-374, Cys-377, Cys-402, and Cys-405.

Can form homooligomers (monomers, dimers and tetramers). Interacts with RAB11A (GDP-bound form); regulates RAB11A. Interacts with FKBP8; may negatively regulate ZFYVE27 phosphorylation. Interacts with VAPA (via MSP domain); may regulate ZFYVE27 retention in the endoplasmic reticulum and its function in cell projections formation. Interacts with VAPB (via MSP domain). Interacts with REEP1, REEP5 and ATL1. Interacts with ATL2, ATL3 and SPAST. Interacts with KIF5A and RTN3. Interacts with RAB11B (GDP-bound form), SURF4, KIF5B and KIF5C. In terms of processing, phosphorylated. Phosphorylation is induced by NGF through the MAPK/ERK pathway and modulates interaction with RAB11A.

The protein resides in the recycling endosome membrane. It is found in the endoplasmic reticulum membrane. Its subcellular location is the cell projection. The protein localises to the growth cone membrane. Functionally, key regulator of RAB11-dependent vesicular trafficking during neurite extension through polarized membrane transport. Promotes axonal elongation and contributes to the establishment of neuronal cell polarity. Involved in nerve growth factor-induced neurite formation in VAPA-dependent manner. Contributes to both the formation and stabilization of the tubular ER network. Involved in ER morphogenesis by regulating the sheet-to-tubule balance and possibly the density of tubule interconnections. Acts as an adapter protein and facilitates the interaction of KIF5A with VAPA, VAPB, SURF4, RAB11A, RAB11B and RTN3 and the ZFYVE27-KIF5A complex contributes to the transport of these proteins in neurons. Can induce formation of neurite-like membrane protrusions in non-neuronal cells in a KIF5A/B-dependent manner. The sequence is that of Protrudin (ZFYVE27) from Homo sapiens (Human).